Reading from the N-terminus, the 160-residue chain is 2-C-methyl-D-erythritol 2,4-cyclodiphosphate synthase (160 aa).

A divalent metal cation is bound by residues Asp12 and His14. 4-CDP-2-C-methyl-D-erythritol 2-phosphate-binding positions include 12–14 (DVH) and 38–39 (HS). An a divalent metal cation-binding site is contributed by His46. 4-CDP-2-C-methyl-D-erythritol 2-phosphate contacts are provided by residues 60-62 (DIG), 65-69 (FPDTD), 136-139 (TTTE), Phe143, and Arg146.

It belongs to the IspF family. Homotrimer. Requires a divalent metal cation as cofactor.

It carries out the reaction 4-CDP-2-C-methyl-D-erythritol 2-phosphate = 2-C-methyl-D-erythritol 2,4-cyclic diphosphate + CMP. Its pathway is isoprenoid biosynthesis; isopentenyl diphosphate biosynthesis via DXP pathway; isopentenyl diphosphate from 1-deoxy-D-xylulose 5-phosphate: step 4/6. Functionally, involved in the biosynthesis of isopentenyl diphosphate (IPP) and dimethylallyl diphosphate (DMAPP), two major building blocks of isoprenoid compounds. Catalyzes the conversion of 4-diphosphocytidyl-2-C-methyl-D-erythritol 2-phosphate (CDP-ME2P) to 2-C-methyl-D-erythritol 2,4-cyclodiphosphate (ME-CPP) with a corresponding release of cytidine 5-monophosphate (CMP). This chain is 2-C-methyl-D-erythritol 2,4-cyclodiphosphate synthase, found in Acinetobacter baumannii (strain AB307-0294).